The following is a 172-amino-acid chain: Small integral membrane protein 23 (172 aa).

Residues 1–36 (MATQQVDSRRQVAAEQVAAQLLERRRGSHCDDEKQT) are Cytoplasmic-facing. The chain crosses the membrane as a helical; Signal-anchor for type II membrane protein span at residues 37–53 (LLALLILVLYLSTEIWG). The Extracellular segment spans residues 54–172 (SSWEVSERIR…LEISLSGAEL (119 aa)). Positions 96–128 (LKEKLHVFSEKLEEEVQQLEQLAWDLELWLDAL) form a coiled coil.

The protein localises to the cell membrane. This Homo sapiens (Human) protein is Small integral membrane protein 23 (SMIM23).